The chain runs to 416 residues: Maltoporin (416 aa).

The first 26 residues, 1-26 (MELTMKKVSVIAAAVAATLAAGSAFA), serve as a signal peptide directing secretion.

The protein belongs to the porin LamB (TC 1.B.3) family. Homotrimer formed of three 18-stranded antiparallel beta-barrels, containing three independent channels.

Its subcellular location is the cell outer membrane. It carries out the reaction beta-maltose(in) = beta-maltose(out). Its function is as follows. Involved in the transport of maltose and maltodextrins. This is Maltoporin from Vibrio cholerae serotype O1 (strain ATCC 39541 / Classical Ogawa 395 / O395).